Here is a 173-residue protein sequence, read N- to C-terminus: Probable WRKY transcription factor 50 (173 aa).

The segment at residues serine 107–methionine 172 is a DNA-binding region (WRKY).

Belongs to the WRKY group II-c family.

The protein resides in the nucleus. Transcription factor. Interacts specifically with the W box (5'-(T)TGAC[CT]-3'), a frequently occurring elicitor-responsive cis-acting element. This chain is Probable WRKY transcription factor 50 (WRKY50), found in Arabidopsis thaliana (Mouse-ear cress).